A 261-amino-acid polypeptide reads, in one-letter code: Small ribosomal subunit protein mS23 (261 aa).

The segment at 228–261 (EQRAAAFTGAPEIPSTEDSLGLEEGVEEKQPQQA) is disordered.

Belongs to the mitochondrion-specific ribosomal protein mS23 family. Component of the mitochondrial small ribosomal subunit.

The protein localises to the mitochondrion. In Aspergillus oryzae (strain ATCC 42149 / RIB 40) (Yellow koji mold), this protein is Small ribosomal subunit protein mS23 (rsm25).